We begin with the raw amino-acid sequence, 449 residues long: Glucose-6-phosphate isomerase (449 aa).

Catalysis depends on Glu291, which acts as the Proton donor. Catalysis depends on residues His312 and Lys426.

Belongs to the GPI family.

It localises to the cytoplasm. The enzyme catalyses alpha-D-glucose 6-phosphate = beta-D-fructose 6-phosphate. Its pathway is carbohydrate biosynthesis; gluconeogenesis. It functions in the pathway carbohydrate degradation; glycolysis; D-glyceraldehyde 3-phosphate and glycerone phosphate from D-glucose: step 2/4. In terms of biological role, catalyzes the reversible isomerization of glucose-6-phosphate to fructose-6-phosphate. This chain is Glucose-6-phosphate isomerase, found in Streptococcus pyogenes serotype M4 (strain MGAS10750).